A 301-amino-acid polypeptide reads, in one-letter code: MSTAYDDIKTRLQGSMVALITPMLRDGTVDYKRLADLIDWQIEQGTHCLVAVGTTGESATLSMQEHSDVIRYFVQHVKGRVPVIAGTGANNTMEAIKLTQDAADAGADCALLVAPYYNKPPQEGLYQHYKAIAEAVNIPQMLYNVPGRTVVDIAQETVERLADLGNIVAIKDATGSVARGEQLIKVVGDRLVVLSGDDGSALELMKVGGKGNISVTANVVPKAMSETFTAALRGDFDAANQVHDVVKHLHRDLFIESSPIPAKYALHKMGMIDKGIRLPLVWLAEQHHATIDTALVRANLL.

T55 contributes to the pyruvate binding site. The active-site Proton donor/acceptor is the Y143. The Schiff-base intermediate with substrate role is filled by K171. I213 lines the pyruvate pocket.

This sequence belongs to the DapA family. Homotetramer; dimer of dimers.

It is found in the cytoplasm. The enzyme catalyses L-aspartate 4-semialdehyde + pyruvate = (2S,4S)-4-hydroxy-2,3,4,5-tetrahydrodipicolinate + H2O + H(+). The protein operates within amino-acid biosynthesis; L-lysine biosynthesis via DAP pathway; (S)-tetrahydrodipicolinate from L-aspartate: step 3/4. Catalyzes the condensation of (S)-aspartate-beta-semialdehyde [(S)-ASA] and pyruvate to 4-hydroxy-tetrahydrodipicolinate (HTPA). The protein is 4-hydroxy-tetrahydrodipicolinate synthase of Psychrobacter arcticus (strain DSM 17307 / VKM B-2377 / 273-4).